We begin with the raw amino-acid sequence, 564 residues long: Probable diguanylate cyclase DgcQ (564 aa).

Helical transmembrane passes span 20–40 (LGPGHIVNLCFIVVLLFSTLL) and 360–380 (IALTLLWALFTTMLLISWYVI). In terms of domain architecture, GGDEF spans 428 to 563 (HPFSVIQVDL…GRNRVFASDN (136 aa)). Position 436 (Asp-436) interacts with Mg(2+). 3 residues coordinate substrate: Asn-444, His-449, and Asp-453. A Mg(2+)-binding site is contributed by Glu-479. The active-site Proton acceptor is Glu-479.

As to quaternary structure, homodimer. Requires Mg(2+) as cofactor.

Its subcellular location is the cell inner membrane. It catalyses the reaction 2 GTP = 3',3'-c-di-GMP + 2 diphosphate. It participates in glycan metabolism; bacterial cellulose biosynthesis. Its pathway is purine metabolism; 3',5'-cyclic di-GMP biosynthesis. Its function is as follows. Catalyzes the synthesis of cyclic-di-GMP (c-di-GMP) via the condensation of 2 GTP molecules. Cyclic-di-GMP is a second messenger which controls cell surface-associated traits in bacteria. Involved in the regulation of cellulose production. The polypeptide is Probable diguanylate cyclase DgcQ (Shigella dysenteriae serotype 1 (strain Sd197)).